The chain runs to 1374 residues: DNA-directed RNA polymerase subunit beta (1374 aa).

It belongs to the RNA polymerase beta chain family. The RNAP catalytic core consists of 2 alpha, 1 beta, 1 beta' and 1 omega subunit. When a sigma factor is associated with the core the holoenzyme is formed, which can initiate transcription.

The catalysed reaction is RNA(n) + a ribonucleoside 5'-triphosphate = RNA(n+1) + diphosphate. DNA-dependent RNA polymerase catalyzes the transcription of DNA into RNA using the four ribonucleoside triphosphates as substrates. This is DNA-directed RNA polymerase subunit beta from Acidovorax sp. (strain JS42).